The following is a 385-amino-acid chain: MKKLSILGVTGSIGTQALDVIKNSNGELKLIGVTANSSVEKMIKIIEEFDPKYVGMMDKTCAGEIKEYCDKNNKSTIVLSEMKGLNKIASLEEIDIVLTSLVGMIGLEPTLEAIKAKKDIALANKETLVVAGELVMSEAKKNNVKILPVDSEHSAIYQSLRGNDLKTLNKIILTASGGPFRGKKICDLNDISVDDALNHPKWNMGRKISIDSATLMNKGLEVIEAHWLFECDYDNIQVVIHPQSIVHSMVEYCDGSIIAQLGAADMRLPIQYALNYTERKNLIAKTLDFYEVSQLTFEKPDLETFKPLKLAFKAGKQGGLMPTILNGANEAAVALFLDEKIEFLDIFNIIENCMNRFEEETKKPLTLENIIELDKKVKKYVVDMK.

NADPH is bound by residues Thr10, Gly11, Ser12, Ile13, and Asn124. Position 125 (Lys125) interacts with 1-deoxy-D-xylulose 5-phosphate. Glu126 is an NADPH binding site. Asp150 serves as a coordination point for Mn(2+). Residues Ser151, Glu152, Ser176, and His199 each contribute to the 1-deoxy-D-xylulose 5-phosphate site. Residue Glu152 participates in Mn(2+) binding. NADPH is bound at residue Gly205. 1-deoxy-D-xylulose 5-phosphate-binding residues include Ser212, Asn217, Lys218, and Glu221. Glu221 contributes to the Mn(2+) binding site.

This sequence belongs to the DXR family. It depends on Mg(2+) as a cofactor. The cofactor is Mn(2+).

It carries out the reaction 2-C-methyl-D-erythritol 4-phosphate + NADP(+) = 1-deoxy-D-xylulose 5-phosphate + NADPH + H(+). The protein operates within isoprenoid biosynthesis; isopentenyl diphosphate biosynthesis via DXP pathway; isopentenyl diphosphate from 1-deoxy-D-xylulose 5-phosphate: step 1/6. Catalyzes the NADPH-dependent rearrangement and reduction of 1-deoxy-D-xylulose-5-phosphate (DXP) to 2-C-methyl-D-erythritol 4-phosphate (MEP). This chain is 1-deoxy-D-xylulose 5-phosphate reductoisomerase, found in Clostridium botulinum (strain Alaska E43 / Type E3).